The primary structure comprises 185 residues: DAN domain family member 5 (185 aa).

Residues 1–23 form the signal peptide; that stretch reads MFRSQFTTLLGLFSGAWLPTGSG. N-linked (GlcNAc...) asparagine glycosylation is present at Asn39. Disulfide bonds link Cys97-Cys144, Cys111-Cys158, Cys121-Cys179, and Cys125-Cys181. Residues 97 to 182 form the CTCK domain; that stretch reads CKALSFVQVI…TVLVQKCQCR (86 aa).

Belongs to the DAN family. As to expression, expressed throughout the neural retina and in the photoreceptor nuclear layer. In the retina, widely expressed in inner nuclear layer, as well as in the ganglion cell layer.

It localises to the secreted. In terms of biological role, antagonist of the extracellular signaling protein NODAL, which is required for correct left-right patterning during embryonic development. Antagonist of BMP4 signaling. Antagonist of TGF-beta signaling. Independently of its role in left-right axis establishment, plays a role during heart development, possibly through the regulation of TGF-beta/Nodal signaling pathway. Displays anti-angiogenic activity by inhibiting endothelial sprouting, migration, and proliferation. Once internalized by endothelial cells, may alter their redox and glycolytic balance. The sequence is that of DAN domain family member 5 (Dand5) from Mus musculus (Mouse).